The primary structure comprises 337 residues: tRNA N6-adenosine threonylcarbamoyltransferase (337 aa).

2 residues coordinate Fe cation: His111 and His115. Residues 134–138 (LVSGG), Asp167, Gly180, and Asn272 each bind substrate. Asp300 lines the Fe cation pocket.

This sequence belongs to the KAE1 / TsaD family. The cofactor is Fe(2+).

The protein resides in the cytoplasm. The enzyme catalyses L-threonylcarbamoyladenylate + adenosine(37) in tRNA = N(6)-L-threonylcarbamoyladenosine(37) in tRNA + AMP + H(+). Its function is as follows. Required for the formation of a threonylcarbamoyl group on adenosine at position 37 (t(6)A37) in tRNAs that read codons beginning with adenine. Is involved in the transfer of the threonylcarbamoyl moiety of threonylcarbamoyl-AMP (TC-AMP) to the N6 group of A37, together with TsaE and TsaB. TsaD likely plays a direct catalytic role in this reaction. This is tRNA N6-adenosine threonylcarbamoyltransferase from Escherichia coli (strain SMS-3-5 / SECEC).